Reading from the N-terminus, the 284-residue chain is 4-hydroxy-3-methylbut-2-enyl diphosphate reductase (284 aa).

Cys12 is a [4Fe-4S] cluster binding site. The (2E)-4-hydroxy-3-methylbut-2-enyl diphosphate site is built by His40 and His72. Residues His40 and His72 each coordinate dimethylallyl diphosphate. Residues His40 and His72 each contribute to the isopentenyl diphosphate site. Cys94 serves as a coordination point for [4Fe-4S] cluster. His122 serves as a coordination point for (2E)-4-hydroxy-3-methylbut-2-enyl diphosphate. Residue His122 participates in dimethylallyl diphosphate binding. Residue His122 participates in isopentenyl diphosphate binding. Glu124 serves as the catalytic Proton donor. Thr161 is a (2E)-4-hydroxy-3-methylbut-2-enyl diphosphate binding site. Residue Cys193 participates in [4Fe-4S] cluster binding. 3 residues coordinate (2E)-4-hydroxy-3-methylbut-2-enyl diphosphate: Ser221, Asn223, and Ser264. Dimethylallyl diphosphate is bound by residues Ser221, Asn223, and Ser264. Ser221, Asn223, and Ser264 together coordinate isopentenyl diphosphate.

The protein belongs to the IspH family. [4Fe-4S] cluster serves as cofactor.

It catalyses the reaction isopentenyl diphosphate + 2 oxidized [2Fe-2S]-[ferredoxin] + H2O = (2E)-4-hydroxy-3-methylbut-2-enyl diphosphate + 2 reduced [2Fe-2S]-[ferredoxin] + 2 H(+). The enzyme catalyses dimethylallyl diphosphate + 2 oxidized [2Fe-2S]-[ferredoxin] + H2O = (2E)-4-hydroxy-3-methylbut-2-enyl diphosphate + 2 reduced [2Fe-2S]-[ferredoxin] + 2 H(+). Its pathway is isoprenoid biosynthesis; dimethylallyl diphosphate biosynthesis; dimethylallyl diphosphate from (2E)-4-hydroxy-3-methylbutenyl diphosphate: step 1/1. The protein operates within isoprenoid biosynthesis; isopentenyl diphosphate biosynthesis via DXP pathway; isopentenyl diphosphate from 1-deoxy-D-xylulose 5-phosphate: step 6/6. Catalyzes the conversion of 1-hydroxy-2-methyl-2-(E)-butenyl 4-diphosphate (HMBPP) into a mixture of isopentenyl diphosphate (IPP) and dimethylallyl diphosphate (DMAPP). Acts in the terminal step of the DOXP/MEP pathway for isoprenoid precursor biosynthesis. The polypeptide is 4-hydroxy-3-methylbut-2-enyl diphosphate reductase (Dehalococcoides mccartyi (strain ATCC BAA-2100 / JCM 16839 / KCTC 5957 / BAV1)).